Consider the following 144-residue polypeptide: UPF0179 protein PF1381 (144 aa).

This sequence belongs to the UPF0179 family.

The chain is UPF0179 protein PF1381 from Pyrococcus furiosus (strain ATCC 43587 / DSM 3638 / JCM 8422 / Vc1).